Consider the following 975-residue polypeptide: Importin-11 (975 aa).

At Met1 the chain carries N-acetylmethionine. In terms of domain architecture, Importin N-terminal spans 28 to 100 (AEEQLKQWET…RAGLITNFNE (73 aa)). HEAT repeat units follow at residues 123–160 (RQWP…TLAS), 209–248 (ERTL…RLKQ), 318–356 (VQCM…KMAF), 422–459 (QTLT…AVGL), 473–509 (WFKN…VKFK), 511–548 (DLRP…DFEF), 555–593 (PYLE…RVNM), 600–636 (GCLV…GLGA), 640–677 (NLYP…TLEN), 683–720 (PELL…SSTE), 743–764 (EGQV…ILGP), 765–804 (QMFQ…QNTS), 819–849 (QEMD…KLSA), 850–887 (LALL…EDPE), and 957–974 (METV…FLQG). A Phosphoserine modification is found at Ser343.

It belongs to the importin beta family. In terms of assembly, interacts with UBE2E3 and RPL12.

Its subcellular location is the cytoplasm. The protein resides in the nucleus. Its function is as follows. Functions in nuclear protein import as nuclear transport receptor. Serves as receptor for nuclear localization signals (NLS) in cargo substrates. Is thought to mediate docking of the importin/substrate complex to the nuclear pore complex (NPC) through binding to nucleoporin and the complex is subsequently translocated through the pore by an energy requiring, Ran-dependent mechanism. At the nucleoplasmic side of the NPC, Ran binds to the importin, the importin/substrate complex dissociates and importin is re-exported from the nucleus to the cytoplasm where GTP hydrolysis releases Ran. The directionality of nuclear import is thought to be conferred by an asymmetric distribution of the GTP- and GDP-bound forms of Ran between the cytoplasm and nucleus. Mediates the nuclear import of UBE2E3, and of RPL12. This is Importin-11 (IPO11) from Homo sapiens (Human).